The sequence spans 557 residues: MNPQANDRKEFQGDCSATGDLTAKHDSAGGNGGGGARYKLMSPAKLPISRSTDITIPPGLSPTSFLESPVFISNIKPEPSPTTGSLFKPRPVHISASSSSYTGRGFHQNTFTEQKSSEFEFRPPASNMVYAELGKIRSEPPVHFQGQGHGSSHSPSSISDAAGSSSELSRPTPPCQMTPTSSDIPAGSDQEESIQTSQNDSRGSTPSILADDGYNWRKYGQKHVKGSEFPRSYYKCTHPNCEVKKLFERSHDGQITDIIYKGTHDHPKPQPGRRNSGGMAAQEERLDKYPSSTGRDEKGSGVYNLSNPNEQTGNPEVPPISASDDGGEAAASNRNKDEPDDDDPFSKRRRMEGAMEITPLVKPIREPRVVVQTLSEVDILDDGYRWRKYGQKVVRGNPNPRSYYKCTAHGCPVRKHVERASHDPKAVITTYEGKHDHDVPTSKSSSNHEIQPRFRPDETDTISLNLGVGISSDGPNHASNEHQHQNQQLVNQTHPNGVNFRFVHASPMSSYYASLNSGMNQYGQRETKNETQNGDISSLNNSSYPYPPNMGRVQSGP.

Residues M1–Q12 show a composition bias toward basic and acidic residues. Disordered stretches follow at residues M1 to A36 and K76 to N215. Over residues S95–Q114 the composition is skewed to polar residues. Over residues S151 to S169 the composition is skewed to low complexity. Residues S193–S207 show a composition bias toward polar residues. The segment at residues T205–P269 is a DNA-binding region (WRKY 1). C236, C241, H264, and H266 together coordinate Zn(2+). A disordered region spans residues D257–R348. A compositionally biased stretch (basic and acidic residues) spans Q282–G299. Over residues Y303 to N314 the composition is skewed to polar residues. Over residues S321–S332 the composition is skewed to low complexity. A DNA-binding region (WRKY 2) is located at residues S375–P440. Residues C406, C411, H435, and H437 each contribute to the Zn(2+) site. Disordered regions lie at residues G433–N486 and N520–P557. Over residues N520 to I536 the composition is skewed to polar residues.

Belongs to the WRKY group I family.

It is found in the nucleus. Its function is as follows. Transcription factor. Interacts specifically with the W box (5'-(T)TGAC[CT]-3'), a frequently occurring elicitor-responsive cis-acting element. This Arabidopsis thaliana (Mouse-ear cress) protein is Probable WRKY transcription factor 20 (WRKY20).